Here is a 148-residue protein sequence, read N- to C-terminus: Small ribosomal subunit protein uS9 (148 aa).

The protein belongs to the universal ribosomal protein uS9 family.

This Aedes aegypti (Yellowfever mosquito) protein is Small ribosomal subunit protein uS9 (RpS16).